The chain runs to 1342 residues: DNA-directed RNA polymerase subunit beta (1342 aa).

Belongs to the RNA polymerase beta chain family. As to quaternary structure, the RNAP catalytic core consists of 2 alpha, 1 beta, 1 beta' and 1 omega subunit. When a sigma factor is associated with the core the holoenzyme is formed, which can initiate transcription.

The enzyme catalyses RNA(n) + a ribonucleoside 5'-triphosphate = RNA(n+1) + diphosphate. Functionally, DNA-dependent RNA polymerase catalyzes the transcription of DNA into RNA using the four ribonucleoside triphosphates as substrates. This is DNA-directed RNA polymerase subunit beta from Glaesserella parasuis serovar 5 (strain SH0165) (Haemophilus parasuis).